Reading from the N-terminus, the 1350-residue chain is ABC-type transporter MDR1 (1350 aa).

Basic and acidic residues predominate over residues 1-11 (MDTVHEGHHGS). Positions 1-84 (MDTVHEGHHG…DEGEDPFAHL (84 aa)) are disordered. Polar residues predominate over residues 22–33 (VEVTNYEKTQLG). Residues 52–63 (KKHKSQKEKKHK) show a composition bias toward basic residues. The 291-residue stretch at 121-411 (VLSALSSIIG…VAPNIQAFTT (291 aa)) folds into the ABC transmembrane type-1 1 domain. The next 6 helical transmembrane spans lie at 124 to 144 (ALSS…FGGL), 170 to 190 (LYFL…TAGF), 243 to 263 (KVGL…VSFI), 271 to 291 (ILMS…GFIV), 350 to 370 (GSMI…AFWM), and 380 to 400 (IEVG…FALG). The ABC transporter 1 domain occupies 446–691 (IELRNIRHIY…QGAYYNLVEA (246 aa)). 481 to 488 (GESGSGKS) contributes to the ATP binding site. Basic and acidic residues predominate over residues 712–731 (KDQNLKHETTKGEQPEDGLK). The interval 712 to 734 (KDQNLKHETTKGEQPEDGLKLAR) is disordered. 6 consecutive transmembrane segments (helical) span residues 779–799 (IGII…VFFA), 830–850 (FMLA…FAVC), 903–923 (LGTI…SLAI), 929–949 (LVCI…FWML), 1014–1034 (ASQS…GTLI), and 1044–1064 (FFLC…IFSF). Residues 779 to 1070 (IGIICSVITG…IFSFAPDMGK (292 aa)) form the ABC transmembrane type-1 2 domain. An ABC transporter 2 domain is found at 1105 to 1343 (IEFRDVHFRY…RGRYWELVNL (239 aa)). Asn-1127 carries an N-linked (GlcNAc...) asparagine glycan. Position 1140-1147 (1140-1147 (GASGCGKS)) interacts with ATP.

Belongs to the ABC transporter superfamily. ABCB family. Multidrug resistance exporter (TC 3.A.1.201) subfamily.

It localises to the cell membrane. Its function is as follows. ABC-type transporter that is involved in the secretion of liamocins, glycolipids (also called heavy oils) composed of a single mannitol or arabitol headgroup linked to either three, four or even six 3,5-dihydroxydecanoic ester tail-groups. In Aureobasidium melanogenum (Aureobasidium pullulans var. melanogenum), this protein is ABC-type transporter MDR1.